A 475-amino-acid chain; its full sequence is Ribulose bisphosphate carboxylase large chain (475 aa).

A propeptide spanning residues 1–2 (MS) is cleaved from the precursor. P3 is subject to N-acetylproline. K14 carries the post-translational modification N6,N6,N6-trimethyllysine. N123 and T173 together coordinate substrate. Catalysis depends on K175, which acts as the Proton acceptor. Position 177 (K177) interacts with substrate. The Mg(2+) site is built by K201, D203, and E204. K201 carries the post-translational modification N6-carboxylysine. Catalysis depends on H294, which acts as the Proton acceptor. Substrate is bound by residues R295, H327, and S379.

The protein belongs to the RuBisCO large chain family. Type I subfamily. In terms of assembly, heterohexadecamer of 8 large chains and 8 small chains; disulfide-linked. The disulfide link is formed within the large subunit homodimers. It depends on Mg(2+) as a cofactor. The disulfide bond which can form in the large chain dimeric partners within the hexadecamer appears to be associated with oxidative stress and protein turnover.

It is found in the plastid. Its subcellular location is the chloroplast. It carries out the reaction 2 (2R)-3-phosphoglycerate + 2 H(+) = D-ribulose 1,5-bisphosphate + CO2 + H2O. The catalysed reaction is D-ribulose 1,5-bisphosphate + O2 = 2-phosphoglycolate + (2R)-3-phosphoglycerate + 2 H(+). Its function is as follows. RuBisCO catalyzes two reactions: the carboxylation of D-ribulose 1,5-bisphosphate, the primary event in carbon dioxide fixation, as well as the oxidative fragmentation of the pentose substrate in the photorespiration process. Both reactions occur simultaneously and in competition at the same active site. The polypeptide is Ribulose bisphosphate carboxylase large chain (Physcomitrium patens (Spreading-leaved earth moss)).